The following is a 783-amino-acid chain: LPS-assembly protein LptD (783 aa).

An N-terminal signal peptide occupies residues 1 to 24 (MKKNYYSLISFSIFTALYSTAGFA).

Belongs to the LptD family. Component of the lipopolysaccharide transport and assembly complex. Interacts with LptE and LptA.

Its subcellular location is the cell outer membrane. Functionally, together with LptE, is involved in the assembly of lipopolysaccharide (LPS) at the surface of the outer membrane. This is LPS-assembly protein LptD from Mannheimia succiniciproducens (strain KCTC 0769BP / MBEL55E).